Reading from the N-terminus, the 326-residue chain is Undecaprenyl-phosphate 4-deoxy-4-formamido-L-arabinose transferase (326 aa).

The next 2 helical transmembrane spans lie at 234–254 (LLSI…ILLI) and 269–289 (VFTL…GMGL).

This sequence belongs to the glycosyltransferase 2 family.

It is found in the cell inner membrane. It carries out the reaction UDP-4-deoxy-4-formamido-beta-L-arabinose + di-trans,octa-cis-undecaprenyl phosphate = 4-deoxy-4-formamido-alpha-L-arabinopyranosyl di-trans,octa-cis-undecaprenyl phosphate + UDP. Its pathway is glycolipid biosynthesis; 4-amino-4-deoxy-alpha-L-arabinose undecaprenyl phosphate biosynthesis; 4-amino-4-deoxy-alpha-L-arabinose undecaprenyl phosphate from UDP-4-deoxy-4-formamido-beta-L-arabinose and undecaprenyl phosphate: step 1/2. It functions in the pathway bacterial outer membrane biogenesis; lipopolysaccharide biosynthesis. Its function is as follows. Catalyzes the transfer of 4-deoxy-4-formamido-L-arabinose from UDP to undecaprenyl phosphate. The modified arabinose is attached to lipid A and is required for resistance to polymyxin and cationic antimicrobial peptides. This is Undecaprenyl-phosphate 4-deoxy-4-formamido-L-arabinose transferase from Aeromonas hydrophila subsp. hydrophila (strain ATCC 7966 / DSM 30187 / BCRC 13018 / CCUG 14551 / JCM 1027 / KCTC 2358 / NCIMB 9240 / NCTC 8049).